The chain runs to 219 residues: Ribose-5-phosphate isomerase A (219 aa).

Substrate contacts are provided by residues 28–31, 81–84, and 94–97; these read TGST, DGAD, and KGGG. Glu103 serves as the catalytic Proton acceptor. Position 121 (Lys121) interacts with substrate.

This sequence belongs to the ribose 5-phosphate isomerase family. Homodimer.

It catalyses the reaction aldehydo-D-ribose 5-phosphate = D-ribulose 5-phosphate. It participates in carbohydrate degradation; pentose phosphate pathway; D-ribose 5-phosphate from D-ribulose 5-phosphate (non-oxidative stage): step 1/1. Its function is as follows. Catalyzes the reversible conversion of ribose-5-phosphate to ribulose 5-phosphate. This is Ribose-5-phosphate isomerase A from Erwinia tasmaniensis (strain DSM 17950 / CFBP 7177 / CIP 109463 / NCPPB 4357 / Et1/99).